We begin with the raw amino-acid sequence, 441 residues long: Damage-control phosphatase ARMT1 (441 aa).

An N-acetylalanine modification is found at A2. K40 is modified (N6-acetyllysine). Position 102 is a phosphoserine (S102). Residues D253 and N254 each contribute to the Mn(2+) site. 253–254 contacts substrate; the sequence is DN. S-adenosyl-L-methionine is bound by residues E258 and D291. Mn(2+) is bound at residue D291. Residues 367-371 and K404 each bind substrate; that span reads DLNYR. The Subfamily III RTxK motif signature appears at 401–404; it reads RTLK.

It belongs to the damage-control phosphatase family. Sugar phosphate phosphatase III subfamily. It depends on Mn(2+) as a cofactor. The cofactor is Ni(2+). In terms of processing, automethylated.

The catalysed reaction is beta-D-fructose 1-phosphate + H2O = D-fructose + phosphate. It carries out the reaction beta-D-fructose 6-phosphate = dihydroxyacetone + D-glyceraldehyde 3-phosphate. It catalyses the reaction L-glutamyl-[protein] + S-adenosyl-L-methionine = [protein]-L-glutamate 5-O-methyl ester + S-adenosyl-L-homocysteine. Functionally, metal-dependent phosphatase that shows phosphatase activity against several substrates, including fructose-1-phosphate and fructose-6-phosphate. Its preference for fructose-1-phosphate, a strong glycating agent that causes DNA damage rather than a canonical yeast metabolite, suggests a damage-control function in hexose phosphate metabolism. Has also been shown to have O-methyltransferase activity that methylates glutamate residues of target proteins to form gamma-glutamyl methyl ester residues. Possibly methylates PCNA, suggesting it is involved in the DNA damage response. The protein is Damage-control phosphatase ARMT1 of Bos taurus (Bovine).